A 67-amino-acid chain; its full sequence is Large ribosomal subunit protein uL29 (67 aa).

Belongs to the universal ribosomal protein uL29 family.

This is Large ribosomal subunit protein uL29 from Rubrobacter xylanophilus (strain DSM 9941 / JCM 11954 / NBRC 16129 / PRD-1).